A 160-amino-acid chain; its full sequence is Protein cornichon homolog 3 (160 aa).

At 1–10 (MAFTFAAFCY) the chain is on the cytoplasmic side. Residues 11 to 31 (MLSLVLCAALIFFAIWHIIAF) form a helical membrane-spanning segment. At 32-72 (DELRTDFKSPIDQCNPVHARERLRNIERICFLLRKLVLPEY) the chain is on the lumenal side. Residues 73–93 (SIHSLFCVMFLCAQEWLTLGL) traverse the membrane as a helical segment. The Cytoplasmic portion of the chain corresponds to 94–138 (NVPLLFYHFWRYFHCPADSSELAYDPPVVMNADTLSYCQKEAWCK). A helical transmembrane segment spans residues 139–159 (LAFYLLSFFYYLYCMIYTLVS). A topological domain (lumenal) is located at residue Ser160.

Belongs to the cornichon family. As to quaternary structure, acts as an auxiliary subunit for AMPA-selective glutamate receptors (AMPARs). Found in a complex with GRIA1, GRIA2, GRIA3, GRIA4, CNIH2, CACNG2, CACNG3, CACNG4, CACNG5, CACNG7 and CACNG8. In terms of tissue distribution, brain. Expressed in the neocortex, hippocampal formation, and cerebellum (at protein level).

It localises to the postsynaptic cell membrane. Functionally, regulates the trafficking and gating properties of AMPA-selective glutamate receptors (AMPARs). Promotes their targeting to the cell membrane and synapses and modulates their gating properties by regulating their rates of activation, deactivation and desensitization. In Rattus norvegicus (Rat), this protein is Protein cornichon homolog 3 (Cnih3).